The sequence spans 645 residues: Iron-regulated surface determinant protein B (645 aa).

The signal sequence occupies residues 1 to 40 (MNKQQKEFKSFYSIRKSSLGVASVAISTLLLLMSNGEAQA). The YSIRK-G/S signaling motif motif lies at 12-23 (YSIRKSSLGVAS). The span at 38 to 53 (AQAAAEETGGTNTEAQ) shows a compositional bias: low complexity. The segment at 38-113 (AQAAAEETGG…APKETKEVKP (76 aa)) is disordered. The segment covering 84-113 (KEVEAPTSETKEAKEVKEVKAPKETKEVKP) has biased composition (basic and acidic residues). NEAT domains follow at residues 144–269 (SAPN…KFKT) and 341–458 (KMTD…TKAN). Met-362 and Tyr-440 together coordinate heme. 2 stretches are compositionally biased toward basic and acidic residues: residues 458-476 (NTDK…KKEA) and 489-534 (VEKE…KGEV). The tract at residues 458–619 (NTDKSNKKEQ…LPQTGEESNK (162 aa)) is disordered. The span at 535–560 (ESSSTTPTKVVSTTQNVAKPTTASSK) shows a compositional bias: low complexity. Positions 585–615 (NIKNTNDGHTQSQNNKNTQENKAKSLPQTGE) are enriched in polar residues. The LPXTG sorting signal signature appears at 610-614 (LPQTG). Thr-613 carries the post-translational modification Pentaglycyl murein peptidoglycan amidated threonine. Residues 614–645 (GEESNKDMTLPLMALLALSSIVAFVLPRKRKN) constitute a propeptide, removed by sortase.

This sequence belongs to the IsdB family. As to quaternary structure, interacts with host HBA; this interaction allows heme extraction as iron source. Interacts with IsdA.

It is found in the secreted. The protein localises to the cell wall. Cell wall-anchored surface receptor that extracts heme from oxidized metHb to enable growth on hemoglobin as a sole iron source. Rapidly extracts heme from hemoglobin and transfers it to IsdA or IsdC, which then relays it to the membrane transporter/IsdEF for internalization. Also promotes resistance to hydrogen peroxide and killing by neutrophils. The sequence is that of Iron-regulated surface determinant protein B (isdB) from Staphylococcus aureus (strain USA300 / TCH1516).